Consider the following 874-residue polypeptide: Alanine--tRNA ligase (874 aa).

Positions 562, 566, 665, and 669 each coordinate Zn(2+).

This sequence belongs to the class-II aminoacyl-tRNA synthetase family. Zn(2+) serves as cofactor.

It is found in the cytoplasm. The enzyme catalyses tRNA(Ala) + L-alanine + ATP = L-alanyl-tRNA(Ala) + AMP + diphosphate. In terms of biological role, catalyzes the attachment of alanine to tRNA(Ala) in a two-step reaction: alanine is first activated by ATP to form Ala-AMP and then transferred to the acceptor end of tRNA(Ala). Also edits incorrectly charged Ser-tRNA(Ala) and Gly-tRNA(Ala) via its editing domain. The polypeptide is Alanine--tRNA ligase (Pseudomonas putida (strain GB-1)).